Reading from the N-terminus, the 203-residue chain is Protein GrpE (203 aa).

Over residues 1 to 20 the composition is skewed to polar residues; sequence MSDNGDNNTKSPQHNNPQPN. A disordered region spans residues 1–46; the sequence is MSDNGDNNTKSPQHNNPQPNEKSDGKVQPGQPQVNPQRKFTAGINK.

This sequence belongs to the GrpE family. Homodimer.

The protein localises to the cytoplasm. Its function is as follows. Participates actively in the response to hyperosmotic and heat shock by preventing the aggregation of stress-denatured proteins, in association with DnaK and GrpE. It is the nucleotide exchange factor for DnaK and may function as a thermosensor. Unfolded proteins bind initially to DnaJ; upon interaction with the DnaJ-bound protein, DnaK hydrolyzes its bound ATP, resulting in the formation of a stable complex. GrpE releases ADP from DnaK; ATP binding to DnaK triggers the release of the substrate protein, thus completing the reaction cycle. Several rounds of ATP-dependent interactions between DnaJ, DnaK and GrpE are required for fully efficient folding. In Ehrlichia chaffeensis (strain ATCC CRL-10679 / Arkansas), this protein is Protein GrpE.